The chain runs to 203 residues: Dual-action ribosomal maturation protein DarP (203 aa).

Disordered stretches follow at residues 1–31 (MRPM…SKSQ) and 183–203 (GASD…DDEA). Residues 186–203 (DSDDEAAGDAGDDHDDEA) are compositionally biased toward acidic residues.

It belongs to the DarP family.

It is found in the cytoplasm. Functionally, member of a network of 50S ribosomal subunit biogenesis factors which assembles along the 30S-50S interface, preventing incorrect 23S rRNA structures from forming. Promotes peptidyl transferase center (PTC) maturation. The sequence is that of Dual-action ribosomal maturation protein DarP from Burkholderia cenocepacia (strain ATCC BAA-245 / DSM 16553 / LMG 16656 / NCTC 13227 / J2315 / CF5610) (Burkholderia cepacia (strain J2315)).